We begin with the raw amino-acid sequence, 196 residues long: NAD(P)H-quinone oxidoreductase subunit I (196 aa).

4Fe-4S ferredoxin-type domains are found at residues 55-84 and 95-124; these read GRIH…VDWE and KHYS…MTEE. Residues cysteine 64, cysteine 67, cysteine 70, cysteine 74, cysteine 104, cysteine 107, cysteine 110, and cysteine 114 each coordinate [4Fe-4S] cluster. Positions 170–196 are disordered; that stretch reads SPHDLPEGSQRSGKRPEEIIEEAEASS.

Belongs to the complex I 23 kDa subunit family. In terms of assembly, NDH-1 is composed of at least 11 different subunits. [4Fe-4S] cluster serves as cofactor.

The protein localises to the cellular thylakoid membrane. The catalysed reaction is a plastoquinone + NADH + (n+1) H(+)(in) = a plastoquinol + NAD(+) + n H(+)(out). It carries out the reaction a plastoquinone + NADPH + (n+1) H(+)(in) = a plastoquinol + NADP(+) + n H(+)(out). Functionally, NDH-1 shuttles electrons from an unknown electron donor, via FMN and iron-sulfur (Fe-S) centers, to quinones in the respiratory and/or the photosynthetic chain. The immediate electron acceptor for the enzyme in this species is believed to be plastoquinone. Couples the redox reaction to proton translocation, and thus conserves the redox energy in a proton gradient. The sequence is that of NAD(P)H-quinone oxidoreductase subunit I from Crocosphaera subtropica (strain ATCC 51142 / BH68) (Cyanothece sp. (strain ATCC 51142)).